A 416-amino-acid chain; its full sequence is MFVESAKKALLALSLLAASAQAVPRVRRQGASSSFDYKSQIVRGVNLGGWLVTEPWITPSLYDSTGGGAVDEWTLCQILGKDEAQAKLSSHWSSFITQSDFDRMAQAGLNHVRIPIGYWAVAPIDGEPYVSGQIDYLDQAVTWARAAGLKVLVDLHGAPGSQNGFDNSGHRGPIQWQQGDTVNQTMTAFDALARRYAQSDTVTAIEAVNEPNIPGGVNEDGLKNYYYGALADVQRLNPSTTLFMSDGFQPVESWNGFMQGSNVVMDTHHYQVFDTGLLSMSIDDHVKTACSLATQHTMQSDKPVVVGEWTGALTDCAKYLNGVGNAARYDGTYMSTTKYGDCTGKSTGSVADFSADEKANTRRYIEAQLEAYEMKSGWLFWTWKTEGAPGWDMQDLLANQLFPTSPTDRQYPHQCS.

Positions 1–22 (MFVESAKKALLALSLLAASAQA) are cleaved as a signal peptide. N183 is a glycosylation site (N-linked (GlcNAc...) asparagine). The active-site Proton donor is E210. 2 cysteine pairs are disulfide-bonded: C290-C415 and C316-C342. The active-site Nucleophile is the E308.

Belongs to the glycosyl hydrolase 5 (cellulase A) family. As to quaternary structure, monomer. Mn(2+) is required as a cofactor.

Its subcellular location is the secreted. It carries out the reaction Successive hydrolysis of beta-D-glucose units from the non-reducing ends of (1-&gt;3)-beta-D-glucans, releasing alpha-glucose.. Its function is as follows. Beta-glucanases participate in the metabolism of beta-glucan, the main structural component of the cell wall. It could also function biosynthetically as a transglycosylase. The sequence is that of Probable glucan 1,3-beta-glucosidase A (exgA) from Aspergillus niger (strain ATCC MYA-4892 / CBS 513.88 / FGSC A1513).